We begin with the raw amino-acid sequence, 657 residues long: Pyoverdine export ATP-binding/permease protein PvdT (657 aa).

Residues 6–245 (IDLRGIRKSY…RSVNPAALQA (240 aa)) form the ABC transporter domain. ATP is bound at residue 43–50 (GASGSGKS). Helical transmembrane passes span 285–305 (ALTLLGIVIGVASVVVMLAVG), 539–559 (IAAISLLVGGIGVMNIMLMTV), 590–610 (LSVVGGLAGIVLALGMGAALL), and 620–640 (LPAVAGAFACALITGVIFGFM).

Belongs to the ABC transporter superfamily. Macrolide exporter (TC 3.A.1.122) family. As to quaternary structure, part of the tripartite efflux system PvdRT-OpmQ, which is composed of an inner membrane component with both ATPase and permease domains, PvdT, a periplasmic membrane fusion protein, PvdR, and an outer membrane component, OpmQ.

It localises to the cell inner membrane. Functionally, part of the tripartite efflux system PvdRT-OpmQ required for the secretion into the extracellular milieu of the siderophore pyoverdine (PVD), which is involved in iron acquisition. This subunit binds PVD and drives its secretion by hydrolyzing ATP. The system is responsible for export of newly synthesized PVD after the final steps of biosynthesis have taken place in the periplasm. It is also responsible for recycling of PVD after internalization of ferri-PVD into the periplasm by the outer-membrane receptor FpvA and release of iron from PVD, thus making PVD available for new cycles of iron uptake. The chain is Pyoverdine export ATP-binding/permease protein PvdT from Pseudomonas syringae pv. syringae (strain B728a).